The chain runs to 188 residues: Segregation and condensation protein B (188 aa).

Belongs to the ScpB family. In terms of assembly, homodimer. Homodimerization may be required to stabilize the binding of ScpA to the Smc head domains. Component of a cohesin-like complex composed of ScpA, ScpB and the Smc homodimer, in which ScpA and ScpB bind to the head domain of Smc. The presence of the three proteins is required for the association of the complex with DNA.

The protein localises to the cytoplasm. Participates in chromosomal partition during cell division. May act via the formation of a condensin-like complex containing Smc and ScpA that pull DNA away from mid-cell into both cell halves. The sequence is that of Segregation and condensation protein B from Streptococcus gordonii (strain Challis / ATCC 35105 / BCRC 15272 / CH1 / DL1 / V288).